The chain runs to 410 residues: MAKINDNYLKLKAGYLFPEIGRRVRAFAEANPSAKVIRLGIGDVTRPLAPAVLKAFHDAVDDLATTDKFAGYGPEQGYDWLINAIIDKSYKPLGVSLKTEEIFISDGSKCDCANILDIFAMDNVVAIGDPVYPVYNDTNVMIGRTGEADEKGYYKGIVYMPCNEANGFIPELPKEKVDIIYLCFPNNPTGTVASKAELKKWVDYANANDAVIFFDAAYEAFITDPSIPHSIYEIEGAKKCAIEFRSFSKTAGFTGVRCGLVVVPEEVMGTTADGERYSFNRLWLRRTTTKFNGASYPVQRAAAAVYSDEGWKQTKEVIDYYMENARIIREGLKEVGVTVFGGVDAPYIWLKTPGGMTSWDFFDKLLTECNVVGTPGSGFGPSGEGYFRLSAFGHRENVIEAVERIKKNLK.

Residues Y15 and G42 each coordinate substrate. Residues Y72, 108–109 (SK), Y132, N187, Y218, and 246–248 (SFS) each bind pyridoxal 5'-phosphate. Substrate-binding residues include K109, Y132, and N187. K249 carries the post-translational modification N6-(pyridoxal phosphate)lysine. Positions 257 and 292 each coordinate pyridoxal 5'-phosphate. N292 and R388 together coordinate substrate.

Belongs to the class-I pyridoxal-phosphate-dependent aminotransferase family. LL-diaminopimelate aminotransferase subfamily. In terms of assembly, homodimer. It depends on pyridoxal 5'-phosphate as a cofactor.

It carries out the reaction (2S,6S)-2,6-diaminopimelate + 2-oxoglutarate = (S)-2,3,4,5-tetrahydrodipicolinate + L-glutamate + H2O + H(+). It participates in amino-acid biosynthesis; L-lysine biosynthesis via DAP pathway; LL-2,6-diaminopimelate from (S)-tetrahydrodipicolinate (aminotransferase route): step 1/1. Involved in the synthesis of meso-diaminopimelate (m-DAP or DL-DAP), required for both lysine and peptidoglycan biosynthesis. Catalyzes the direct conversion of tetrahydrodipicolinate to LL-diaminopimelate. The chain is LL-diaminopimelate aminotransferase from Geotalea daltonii (strain DSM 22248 / JCM 15807 / FRC-32) (Geobacter daltonii).